Here is a 278-residue protein sequence, read N- to C-terminus: Large ribosomal subunit protein uL2 (278 aa).

Residues 223–278 (GVAMNPIDHPHGGGEGRTSGGRHPVTPWGFPTKGKKTRSNKRTDTFIVSSRHNRKK) form a disordered region.

The protein belongs to the universal ribosomal protein uL2 family. As to quaternary structure, part of the 50S ribosomal subunit. Forms a bridge to the 30S subunit in the 70S ribosome.

Its function is as follows. One of the primary rRNA binding proteins. Required for association of the 30S and 50S subunits to form the 70S ribosome, for tRNA binding and peptide bond formation. It has been suggested to have peptidyltransferase activity; this is somewhat controversial. Makes several contacts with the 16S rRNA in the 70S ribosome. This chain is Large ribosomal subunit protein uL2, found in Methylobacterium nodulans (strain LMG 21967 / CNCM I-2342 / ORS 2060).